A 79-amino-acid polypeptide reads, in one-letter code: uncharacterized protein (79 aa).

Its subcellular location is the mitochondrion. This is an uncharacterized protein from Oenothera berteroana (Bertero's evening primrose).